The primary structure comprises 155 residues: Protein Smg homolog (155 aa).

This sequence belongs to the Smg family.

This Azoarcus sp. (strain BH72) protein is Protein Smg homolog.